The sequence spans 121 residues: MARIAGVDIPRDKRVVVSLTYIYGIGNTTAKKVLANVGVSEDVRVRDLTNEQTDAIRAEIDKLKVEGDLRREVNLNIKRLMEIGSYRGIRHRRGLPTRGQNTKNNARTRKGPTKTVAGKKK.

The interval 90-121 (RHRRGLPTRGQNTKNNARTRKGPTKTVAGKKK) is disordered. Basic residues predominate over residues 106–121 (ARTRKGPTKTVAGKKK).

The protein belongs to the universal ribosomal protein uS13 family. In terms of assembly, part of the 30S ribosomal subunit. Forms a loose heterodimer with protein S19. Forms two bridges to the 50S subunit in the 70S ribosome.

Located at the top of the head of the 30S subunit, it contacts several helices of the 16S rRNA. In the 70S ribosome it contacts the 23S rRNA (bridge B1a) and protein L5 of the 50S subunit (bridge B1b), connecting the 2 subunits; these bridges are implicated in subunit movement. Contacts the tRNAs in the A and P-sites. This chain is Small ribosomal subunit protein uS13, found in Enterococcus faecalis (strain ATCC 700802 / V583).